A 490-amino-acid chain; its full sequence is Lysine--tRNA ligase (490 aa).

2 residues coordinate Mg(2+): Glu-400 and Glu-407.

It belongs to the class-II aminoacyl-tRNA synthetase family. In terms of assembly, homodimer. It depends on Mg(2+) as a cofactor.

The protein localises to the cytoplasm. It catalyses the reaction tRNA(Lys) + L-lysine + ATP = L-lysyl-tRNA(Lys) + AMP + diphosphate. In Mycoplasma genitalium (strain ATCC 33530 / DSM 19775 / NCTC 10195 / G37) (Mycoplasmoides genitalium), this protein is Lysine--tRNA ligase (lysS).